A 253-amino-acid polypeptide reads, in one-letter code: HTH-type transcriptional repressor DasR (253 aa).

The HTH gntR-type domain maps to 16-86; it reads RAQRVPKYYR…QGKGTFVAKP (71 aa). The H-T-H motif DNA-binding region spans 46 to 65; the sequence is ERTLAAEFDTSRTTVPQALQ.

The protein localises to the cytoplasm. Its function is as follows. Global regulator that is part of the nutrient-sensing system. In the absence of glucosamine 6-P (GlcN6P), represses the phosphotransferase system (PTS) specific for the uptake of N-acetylglucosamine (PTSNag), and genes involved in the metabolism of chitin, as well as several genes involved in development, thereby linking carbon availability to morphogenesis. Regulates the dasABC transport operon involved in glucose-related morphogenesis. Essential for development. This is HTH-type transcriptional repressor DasR (dasR) from Streptomyces griseus.